The chain runs to 762 residues: Molybdenum cofactor sulfurase 2 (762 aa).

Lys234 bears the N6-(pyridoxal phosphate)lysine mark. The active site involves Cys400. One can recognise an MOSC domain in the interval 590 to 738; that stretch reads AWISKALRMP…LECGSILEPV (149 aa).

The protein belongs to the class-V pyridoxal-phosphate-dependent aminotransferase family. MOCOS subfamily. Requires pyridoxal 5'-phosphate as cofactor.

It catalyses the reaction Mo-molybdopterin + L-cysteine + AH2 = thio-Mo-molybdopterin + L-alanine + A + H2O. Sulfurates the molybdenum cofactor. Sulfation of molybdenum is essential for xanthine dehydrogenase (XDH) and aldehyde oxidase (ADO) enzymes in which molybdenum cofactor is liganded by 1 oxygen and 1 sulfur atom in active form. The sequence is that of Molybdenum cofactor sulfurase 2 from Aedes aegypti (Yellowfever mosquito).